The sequence spans 214 residues: Adenylate kinase (214 aa).

10 to 15 lines the ATP pocket; that stretch reads GAGKGT. The NMP stretch occupies residues 30 to 59; sequence STGDMFRAAIKAGTELGKQAKALMDEGKLV. AMP is bound by residues T31, R36, 57–59, 85–88, and Q92; these read KLV and GFPR. Residues 122–159 are LID; sequence GRRVHQASGRSYHIVYNPPKVEGKDDVTGEDLIIRADD. Residues R123 and 132–133 contribute to the ATP site; that span reads SY. AMP contacts are provided by R156 and R167. Q200 lines the ATP pocket.

The protein belongs to the adenylate kinase family. Monomer.

The protein resides in the cytoplasm. The catalysed reaction is AMP + ATP = 2 ADP. It participates in purine metabolism; AMP biosynthesis via salvage pathway; AMP from ADP: step 1/1. Catalyzes the reversible transfer of the terminal phosphate group between ATP and AMP. Plays an important role in cellular energy homeostasis and in adenine nucleotide metabolism. It may be linked to the biosynthesis of lipopolysaccharide surface molecules, which are important for the pathogenesis of H.influenzae. The polypeptide is Adenylate kinase (Haemophilus influenzae (strain ATCC 51907 / DSM 11121 / KW20 / Rd)).